A 173-amino-acid chain; its full sequence is Alpha-crystallin A chain (173 aa).

The residue at position 1 (Met-1) is an N-acetylmethionine. The interval 1 to 63 is required for complex formation with BFSP1 and BFSP2; that stretch reads MDIAIQHPWF…RTVLDSGISE (63 aa). Deamidated glutamine; partial is present on Gln-6. A glycan (N-linked (Glc) (glycation) lysine) is linked at Lys-11. Residue Ser-45 is modified to Phosphoserine. Position 50 is a deamidated glutamine; partial (Gln-50). The sHSP domain occupies 52 to 162; that stretch reads LFRTVLDSGI…GHSERAIPVS (111 aa). Lys-70 carries the N6-acetyllysine modification. A glycan (N-linked (Glc) (glycation) lysine) is linked at Lys-78. Gln-90 is modified (deamidated glutamine; partial). Lys-99 carries the post-translational modification N6-acetyllysine. His-100 contacts Zn(2+). Deamidated asparagine; partial is present on Asn-101. Zn(2+) contacts are provided by Glu-102 and His-107. Ser-122 carries the phosphoserine modification. Asn-123 carries the post-translational modification Deamidated asparagine; partial. The disordered stretch occupies residues 144–173; it reads PKIPSGVDAGHSERAIPVSREEKPSSAPSS. Basic and acidic residues predominate over residues 153-167; the sequence is GHSERAIPVSREEKP. Residue His-154 participates in Zn(2+) binding. The important for oligomerization stretch occupies residues 157 to 163; it reads RAIPVSR. Residue Ser-162 is glycosylated (O-linked (GlcNAc) serine).

This sequence belongs to the small heat shock protein (HSP20) family. In terms of assembly, heteromer composed of three CRYAA and one CRYAB subunits. Inter-subunit bridging via zinc ions enhances stability, which is crucial as there is no protein turn over in the lens. Can also form homodimers and homotetramers (dimers of dimers) which serve as the building blocks of homooligomers. Within homooligomers, the zinc-binding motif is created from residues of 3 different molecules. His-100 and Glu-102 from one molecule are ligands of the zinc ion, and His-107 and His-154 residues from additional molecules complete the site with tetrahedral coordination geometry. Part of a complex required for lens intermediate filament formation composed of BFSP1, BFSP2 and CRYAA. Acetylation at Lys-70 may increase chaperone activity. In terms of processing, undergoes age-dependent proteolytical cleavage at the C-terminus.

The protein resides in the cytoplasm. Its subcellular location is the nucleus. Its function is as follows. Contributes to the transparency and refractive index of the lens. Acts as a chaperone, preventing aggregation of various proteins under a wide range of stress conditions. Required for the correct formation of lens intermediate filaments as part of a complex composed of BFSP1, BFSP2 and CRYAA. The sequence is that of Alpha-crystallin A chain (CRYAA) from Bos taurus (Bovine).